The sequence spans 417 residues: Phosphoglycerate kinase (417 aa).

The (2R)-3-phosphoglycerate site is built by Val23, Asp24, Phe25, Asn26, Gln38, Arg39, Ser62, His63, Gly65, Arg66, Leu121, Arg122, His169, and Arg170. An ADP-binding site is contributed by Gly213. Residue Gly213 coordinates CDP. Residues Ala214 and Lys215 each contribute to the AMP site. Residue Ala214 coordinates ATP. Ala214 lines the Mg(2+) pocket. Asp218 is a CDP binding site. Mg(2+) is bound at residue Asp218. An AMP-binding site is contributed by Lys219. Position 219 (Lys219) interacts with ATP. Residue Gly237 participates in ADP binding. Gly237 provides a ligand contact to CDP. Residues Gly238 and Gly312 each contribute to the AMP site. Residues Gly238 and Gly312 each coordinate ATP. CDP-binding residues include Gly337 and Phe342. Phe342 serves as a coordination point for ADP. An AMP-binding site is contributed by Glu343. ATP contacts are provided by Glu343, Asp374, and Thr375. Asp374 provides a ligand contact to Mg(2+).

It belongs to the phosphoglycerate kinase family. In terms of assembly, monomer. The cofactor is Mg(2+).

The protein resides in the cytoplasm. It localises to the mitochondrion. It carries out the reaction (2R)-3-phosphoglycerate + ATP = (2R)-3-phospho-glyceroyl phosphate + ADP. It participates in carbohydrate degradation; glycolysis; pyruvate from D-glyceraldehyde 3-phosphate: step 2/5. Functionally, catalyzes one of the two ATP producing reactions in the glycolytic pathway via the reversible conversion of 1,3-diphosphoglycerate to 3-phosphoglycerate. Both L- and D- forms of purine and pyrimidine nucleotides can be used as substrates, but the activity is much lower on pyrimidines. Negatively regulates the biosynthesis of acetyl-CoA from pyruvate in the mitochondrion. In Candida maltosa (Yeast), this protein is Phosphoglycerate kinase (PGK1).